The sequence spans 188 residues: Ribosome-recycling factor (188 aa).

It belongs to the RRF family.

Its subcellular location is the cytoplasm. Functionally, responsible for the release of ribosomes from messenger RNA at the termination of protein biosynthesis. May increase the efficiency of translation by recycling ribosomes from one round of translation to another. This is Ribosome-recycling factor from Blochmanniella pennsylvanica (strain BPEN).